Consider the following 345-residue polypeptide: UDP-3-O-acylglucosamine N-acyltransferase (345 aa).

The Proton acceptor role is filled by histidine 253.

The protein belongs to the transferase hexapeptide repeat family. LpxD subfamily. In terms of assembly, homotrimer.

It carries out the reaction a UDP-3-O-[(3R)-3-hydroxyacyl]-alpha-D-glucosamine + a (3R)-hydroxyacyl-[ACP] = a UDP-2-N,3-O-bis[(3R)-3-hydroxyacyl]-alpha-D-glucosamine + holo-[ACP] + H(+). The protein operates within bacterial outer membrane biogenesis; LPS lipid A biosynthesis. In terms of biological role, catalyzes the N-acylation of UDP-3-O-acylglucosamine using 3-hydroxyacyl-ACP as the acyl donor. Is involved in the biosynthesis of lipid A, a phosphorylated glycolipid that anchors the lipopolysaccharide to the outer membrane of the cell. This Rickettsia massiliae (strain Mtu5) protein is UDP-3-O-acylglucosamine N-acyltransferase.